A 475-amino-acid polypeptide reads, in one-letter code: Tubulin epsilon chain (475 aa).

Residue 148–154 (GGGTGSG) participates in GTP binding.

The protein belongs to the tubulin family. Found in a complex with TEDC1, TEDC2, TUBE1 and TUBD1.

Its subcellular location is the cytoplasm. It is found in the cytoskeleton. It localises to the microtubule organizing center. The protein localises to the centrosome. This chain is Tubulin epsilon chain (Tube1), found in Mus musculus (Mouse).